A 201-amino-acid chain; its full sequence is Prostamide/prostaglandin F synthase (201 aa).

It belongs to the peroxiredoxin-like PRXL2 family. Prostamide/prostaglandin F synthase subfamily.

The protein localises to the cytoplasm. The protein resides in the cytosol. The catalysed reaction is prostaglandin H2 + [thioredoxin]-dithiol = prostaglandin F2alpha + [thioredoxin]-disulfide. The enzyme catalyses prostamide F2alpha + [thioredoxin]-disulfide = prostamide H2 + [thioredoxin]-dithiol. Its function is as follows. Catalyzes the reduction of prostaglandin-ethanolamide H(2) (prostamide H(2)) to prostamide F(2alpha) with NADPH as proton donor. Also able to reduce prostaglandin H(2) to prostaglandin F(2alpha). The polypeptide is Prostamide/prostaglandin F synthase (prxl2b) (Danio rerio (Zebrafish)).